Consider the following 253-residue polypeptide: uncharacterized protein (253 aa).

NADP(+) contacts are provided by Ile17, Ser36, Asp62, Asn89, Tyr158, Lys162, Val191, and Thr193. The Proton donor role is filled by Tyr158. The Lowers pKa of active site Tyr role is filled by Lys162.

This sequence belongs to the short-chain dehydrogenases/reductases (SDR) family.

The protein localises to the cytoplasm. It localises to the nucleus. This is an uncharacterized protein from Schizosaccharomyces pombe (strain 972 / ATCC 24843) (Fission yeast).